Here is a 290-residue protein sequence, read N- to C-terminus: MKSGFVSIIGRPSTGKSTLLNSICGHQISITSSTPQTTRNKIKGIFTDKRGQIIFIDTPGFHLSKKNFNIALMNNVYSAIIETELIIYVIDIQDQPGTEENEILTIIQRSKINFIVVINKIDIHKTKEKEIMTFLEEKKIQKNKIIKISAEKQINIETMKDKIYENLNEGPLYYPKEYYTDQKINLRISEIIRGVTIKKLKEELPYSIYTEIEILEDRENKFFIKANIIVAGESQKGIIVGKGGKGIKSIGEESRKIISKILEKKCNLFLQVKLRKNWNKNAKLIKNLIN.

In terms of domain architecture, Era-type G spans 2 to 169; it reads KSGFVSIIGR…KDKIYENLNE (168 aa). Residues 10–17 form a G1 region; it reads GRPSTGKS. Position 10 to 17 (10 to 17) interacts with GTP; it reads GRPSTGKS. The G2 stretch occupies residues 36–40; the sequence is QTTRN. Positions 57–60 are G3; the sequence is DTPG. Residues 57-61 and 119-122 contribute to the GTP site; these read DTPGF and NKID. Residues 119–122 are G4; sequence NKID. A G5 region spans residues 148–150; sequence ISA. A KH type-2 domain is found at 200–276; the sequence is LKEELPYSIY…NLFLQVKLRK (77 aa).

Belongs to the TRAFAC class TrmE-Era-EngA-EngB-Septin-like GTPase superfamily. Era GTPase family. In terms of assembly, monomer.

It is found in the cytoplasm. Its subcellular location is the cell inner membrane. Functionally, an essential GTPase that binds both GDP and GTP, with rapid nucleotide exchange. Plays a role in 16S rRNA processing and 30S ribosomal subunit biogenesis and possibly also in cell cycle regulation and energy metabolism. The chain is GTPase Era from Borrelia duttonii (strain Ly).